Here is a 512-residue protein sequence, read N- to C-terminus: Glycerol kinase (512 aa).

Thr-13 provides a ligand contact to ADP. 3 residues coordinate ATP: Thr-13, Thr-14, and Ser-15. Thr-13 contacts sn-glycerol 3-phosphate. Residue Arg-17 participates in ADP binding. Sn-glycerol 3-phosphate is bound by residues Arg-83, Glu-84, Tyr-135, and Asp-252. Glycerol is bound by residues Arg-83, Glu-84, Tyr-135, Asp-252, and Gln-253. ADP is bound by residues Thr-274 and Gly-318. The ATP site is built by Thr-274, Gly-318, Gln-322, and Gly-419. Residues Gly-419 and Asn-423 each contribute to the ADP site.

The protein belongs to the FGGY kinase family.

The enzyme catalyses glycerol + ATP = sn-glycerol 3-phosphate + ADP + H(+). It functions in the pathway polyol metabolism; glycerol degradation via glycerol kinase pathway; sn-glycerol 3-phosphate from glycerol: step 1/1. With respect to regulation, inhibited by fructose 1,6-bisphosphate (FBP). Its function is as follows. Key enzyme in the regulation of glycerol uptake and metabolism. Catalyzes the phosphorylation of glycerol to yield sn-glycerol 3-phosphate. This is Glycerol kinase from Corynebacterium kroppenstedtii (strain DSM 44385 / JCM 11950 / CIP 105744 / CCUG 35717).